Here is a 74-residue protein sequence, read N- to C-terminus: Translation initiation factor IF-1 (74 aa).

In terms of domain architecture, S1-like spans 1–72; that stretch reads MAKQDAIEME…TKGRITYRLR (72 aa).

It belongs to the IF-1 family. As to quaternary structure, component of the 30S ribosomal translation pre-initiation complex which assembles on the 30S ribosome in the order IF-2 and IF-3, IF-1 and N-formylmethionyl-tRNA(fMet); mRNA recruitment can occur at any time during PIC assembly.

It localises to the cytoplasm. Its function is as follows. One of the essential components for the initiation of protein synthesis. Stabilizes the binding of IF-2 and IF-3 on the 30S subunit to which N-formylmethionyl-tRNA(fMet) subsequently binds. Helps modulate mRNA selection, yielding the 30S pre-initiation complex (PIC). Upon addition of the 50S ribosomal subunit IF-1, IF-2 and IF-3 are released leaving the mature 70S translation initiation complex. In Acaryochloris marina (strain MBIC 11017), this protein is Translation initiation factor IF-1.